The sequence spans 525 residues: Rho guanine nucleotide exchange factor gef3 (525 aa).

The DH domain occupies 72-268; it reads AIISVLEEFR…EIASQRMNEL (197 aa).

It localises to the cytoplasm. In terms of biological role, has a role in the control of cell polarity and cytokinesis. Involved in bipolar growth and septum formation. The polypeptide is Rho guanine nucleotide exchange factor gef3 (gef3) (Schizosaccharomyces pombe (strain 972 / ATCC 24843) (Fission yeast)).